A 747-amino-acid chain; its full sequence is Meprin A subunit alpha (747 aa).

Positions 1–20 (MLWIQPACLLSLIFSAHIAA) are cleaved as a signal peptide. The propeptide occupies 21–64 (VSIKHLLNGSDHDTDVGEQKDIFEINLAAGLNLFQGDILLPRTR). Asn28 and Asn139 each carry an N-linked (GlcNAc...) asparagine glycan. The region spanning 65–259 (NAMRDPSSRW…IRLNRMYNCT (195 aa)) is the Peptidase M12A domain. Residues 65–713 (NAMRDPSSRW…FYAGERCQAM (649 aa)) lie on the Extracellular side of the membrane. Intrachain disulfides connect Cys106–Cys258, Cys127–Cys146, and Cys268–Cys430. Residue His154 participates in Zn(2+) binding. Glu155 is a catalytic residue. Residues His158 and His164 each contribute to the Zn(2+) site. Asn221, Asn257, Asn317, Asn413, Asn439, Asn533, and Asn540 each carry an N-linked (GlcNAc...) asparagine glycan. The region spanning 263 to 432 (TLLDHCDFEK…ITLTETPCPA (170 aa)) is the MAM domain. Residues 433-594 (GVWTIRNISQ…GDSLIIFVDF (162 aa)) form the MATH domain. Residues 638-663 (ESLPSSLGQRHPSRQKRSVENTGPME) are disordered. Positions 671 to 711 (FRDPCDPNPCQNEGTCVNVKGMASCRCVSGHAFFYAGERCQ) constitute an EGF-like domain. 3 disulfides stabilise this stretch: Cys675/Cys686, Cys680/Cys695, and Cys697/Cys710. Residues 714-741 (HVHGSLLGLLIGCIAGLIFLTFVTFSTT) traverse the membrane as a helical segment. The Cytoplasmic portion of the chain corresponds to 742-747 (NGKLRQ).

In terms of assembly, homotetramer consisting of disulfide-linked alpha subunits, homooligomer consisting of disulfide-linked alpha subunit homodimers, or heterotetramer of two alpha and two beta subunits formed by non-covalent association of two disulfide-linked heterodimers. Genetic factors determine which oligomer(s) will be formed (strain-specific). Interacts with MBL2 through its carbohydrate moiety. This interaction may inhibit its catalytic activity. It depends on Zn(2+) as a cofactor. N-glycosylated; contains GlcNAc, galactose, mannose and a small amount of fucose. In terms of tissue distribution, kidney, intestinal brush borders and salivary ducts.

Its subcellular location is the membrane. It catalyses the reaction Hydrolysis of protein and peptide substrates preferentially on carboxyl side of hydrophobic residues.. Inhibited by metal ion chelators EDTA and 1,10-phenanthroline, bradykinin analogs, cysteine, CONA65, and several hydroxamate compounds, particularly tyrosine hydroxamate. Not inhibited by 3,4-dichloroisocourmarin, soybean trypsin inhibitor, or the cysteine proteinase inhibitors iodoacetic acid and E-64. This chain is Meprin A subunit alpha (Mep1a), found in Mus musculus (Mouse).